We begin with the raw amino-acid sequence, 175 residues long: Adenine phosphoribosyltransferase (175 aa).

This sequence belongs to the purine/pyrimidine phosphoribosyltransferase family. As to quaternary structure, homodimer.

The protein localises to the cytoplasm. The enzyme catalyses AMP + diphosphate = 5-phospho-alpha-D-ribose 1-diphosphate + adenine. Its pathway is purine metabolism; AMP biosynthesis via salvage pathway; AMP from adenine: step 1/1. In terms of biological role, catalyzes a salvage reaction resulting in the formation of AMP, that is energically less costly than de novo synthesis. This chain is Adenine phosphoribosyltransferase, found in Lactobacillus gasseri (strain ATCC 33323 / DSM 20243 / BCRC 14619 / CIP 102991 / JCM 1131 / KCTC 3163 / NCIMB 11718 / NCTC 13722 / AM63).